We begin with the raw amino-acid sequence, 207 residues long: Cytochrome c biogenesis ATP-binding export protein CcmA 1 (207 aa).

The ABC transporter domain occupies 6–207; the sequence is LEALDLAGVR…KTSQTVRMGA (202 aa). Residue 38 to 45 coordinates ATP; that stretch reads GENGSGKT.

It belongs to the ABC transporter superfamily. CcmA exporter (TC 3.A.1.107) family. In terms of assembly, the complex is composed of two ATP-binding proteins (CcmA) and two transmembrane proteins (CcmB).

The protein resides in the cell inner membrane. It catalyses the reaction heme b(in) + ATP + H2O = heme b(out) + ADP + phosphate + H(+). Part of the ABC transporter complex CcmAB involved in the biogenesis of c-type cytochromes; once thought to export heme, this seems not to be the case, but its exact role is uncertain. Responsible for energy coupling to the transport system. The polypeptide is Cytochrome c biogenesis ATP-binding export protein CcmA 1 (Cupriavidus metallidurans (strain ATCC 43123 / DSM 2839 / NBRC 102507 / CH34) (Ralstonia metallidurans)).